Here is a 149-residue protein sequence, read N- to C-terminus: Transcriptional repressor NrdR (149 aa).

A zinc finger lies at cysteine 3 to cysteine 34. Residues proline 49–glutamine 139 form the ATP-cone domain.

It belongs to the NrdR family. Zn(2+) serves as cofactor.

Its function is as follows. Negatively regulates transcription of bacterial ribonucleotide reductase nrd genes and operons by binding to NrdR-boxes. The chain is Transcriptional repressor NrdR from Haemophilus influenzae (strain PittEE).